The chain runs to 194 residues: MRMWELLPSKIKYGISTIISIIVFLFFLEFLGQPVLKSVSYTITTITILAFIFGKYLWKYFYIDYLKHKFCPDFNGRWIGKIESNYSGGTKVEFPLEIKADFFSIKMKGNTTIGRTYSNYCKVVRAEDDSFELVYMFKVFNDTPSITDTSFYEGAARLRVIDIKTMNMKGVFWTNRCWENGKNTAGIIELSKEV.

The required for cell toxicity stretch occupies residues methionine 1–aspartate 73. The next 2 membrane-spanning stretches (helical) occupy residues isoleucine 15–valine 35 and isoleucine 43–isoleucine 63.

It belongs to the CBASS Cap15 membrane effector family. In terms of assembly, the beta barrel domain oligomerizes; in the presence of cyclic nucleotides (probably 3',3'-cGAMP, but the cognate CD-NTase makes at least 4 other cyclic nucleotides) higher-level oligomers are detected.

Its subcellular location is the cell inner membrane. Its function is as follows. Effector protein of a CBASS antivirus system. CBASS (cyclic oligonucleotide-based antiphage signaling system) provides immunity against bacteriophages. The CD-NTase protein (CdnB) synthesizes cyclic nucleotides in response to infection; these serve as specific second messenger signals. The signals activate a diverse range of effectors, leading to bacterial cell death and thus abortive phage infection. Causes cell death in response to 3',3'-cGAMP upon coexpression in E.coli with V.cholerae DncV; inactivating DncV prevents cell death. Upon induction in E.coli with non-cognate DncV, the cell inner membrane shrinks and separates from the cell wall with a concomitant increase in the periplasm. Binds cyclic nucleotide second messenger 3',3'-cGAMP, probably oligomerizing, and induces cell membrane shrinkage and rupture, leading to cell death. A type I CBASS system. Functionally, protects E.coli against phage infection. When the CBASS operon (cdnB-cap15) is introduced in E.coli MG1655 there is about 100-fold protection against phage T2 and about 10-fold protection against phage T5 and T6. The protein is CD-NTase-associated protein 15 of Escherichia albertii.